Consider the following 245-residue polypeptide: S-methyl-5'-thioinosine phosphorylase (245 aa).

Phosphate contacts are provided by residues Thr-10 and 52 to 53 (RH). Met-185 is a binding site for substrate. Thr-186 contributes to the phosphate binding site. Residue 209-211 (NPA) coordinates substrate.

Belongs to the PNP/MTAP phosphorylase family. MTAP subfamily. Homotrimer.

It carries out the reaction S-methyl-5'-thioinosine + phosphate = 5-(methylsulfanyl)-alpha-D-ribose 1-phosphate + hypoxanthine. It participates in purine metabolism; purine nucleoside salvage. Its function is as follows. Catalyzes the reversible phosphorylation of S-methyl-5'-thioinosine (MTI) to hypoxanthine and 5-methylthioribose-1-phosphate. Involved in the breakdown of S-methyl-5'-thioadenosine (MTA), a major by-product of polyamine biosynthesis. Catabolism of (MTA) occurs via deamination to MTI and phosphorolysis to hypoxanthine. Involved in quorum sensing. The protein is S-methyl-5'-thioinosine phosphorylase of Pseudomonas aeruginosa (strain ATCC 15692 / DSM 22644 / CIP 104116 / JCM 14847 / LMG 12228 / 1C / PRS 101 / PAO1).